We begin with the raw amino-acid sequence, 401 residues long: Elongation factor Tu (401 aa).

The 202-residue stretch at 10 to 211 folds into the tr-type G domain; that stretch reads KPHLNVGTIG…ALDTFVPNPK (202 aa). Residues 19–26 are G1; the sequence is GHVDHGKT. A GTP-binding site is contributed by 19–26; it reads GHVDHGKT. A Mg(2+)-binding site is contributed by threonine 26. The G2 stretch occupies residues 62–66; that stretch reads GITIA. Positions 83–86 are G3; that stretch reads DCPG. Residues 83 to 87 and 138 to 141 contribute to the GTP site; these read DCPGH and NKAD. The G4 stretch occupies residues 138-141; that stretch reads NKAD. Residues 179 to 181 form a G5 region; the sequence is SAV.

It belongs to the TRAFAC class translation factor GTPase superfamily. Classic translation factor GTPase family. EF-Tu/EF-1A subfamily. As to quaternary structure, monomer.

The protein resides in the cytoplasm. It carries out the reaction GTP + H2O = GDP + phosphate + H(+). Functionally, GTP hydrolase that promotes the GTP-dependent binding of aminoacyl-tRNA to the A-site of ribosomes during protein biosynthesis. The chain is Elongation factor Tu from Leptospira interrogans serogroup Icterohaemorrhagiae serovar copenhageni (strain Fiocruz L1-130).